The following is a 40-amino-acid chain: QGPPISIDLSLELLRKMIEIEKQEKEKQQAANNRLLLDTI.

Gln-1 is subject to Pyrrolidone carboxylic acid. Isoleucine amide is present on Ile-40.

The protein belongs to the sauvagine/corticotropin-releasing factor/urotensin I family.

The protein resides in the secreted. Hypotensive and diuretic peptide. This Phyllomedusa sauvagei (Sauvage's leaf frog) protein is Sauvagin.